The primary structure comprises 496 residues: RNA-binding motif protein, Y chromosome, family 1 member F/J (496 aa).

The RRM domain maps to 8-85 (GKLFIGGLNR…KAIKVEQAKK (78 aa)). 2 disordered regions span residues 81 to 345 (EQAK…YAPP) and 452 to 496 (KDQR…SSRY). Low complexity-rich tracts occupy residues 97–114 (PASS…SARG) and 149–159 (PVKRGPSSRSG). Residues 175 to 184 (NSWMGSQGPM) are compositionally biased toward polar residues. Composition is skewed to basic and acidic residues over residues 204-214 (RNDRMSTRHDG), 242-253 (DNGHSNRDEHSS), 276-289 (AYRD…DESY), 313-326 (GYRD…HESY), 335-345 (SSRETRDYAPP), and 484-496 (GESR…SSRY).

Interacts with splicing factor proteins SFRS3/SRP20, TRA2B/SFRS10, KHDRBS1/SAM68 and KHDRBS3. Testis-specific.

The protein localises to the nucleus. RNA-binding protein which may be involved in spermatogenesis. Required for sperm development, possibly by participating in pre-mRNA splicing in the testis. The protein is RNA-binding motif protein, Y chromosome, family 1 member F/J (RBMY1F) of Homo sapiens (Human).